The primary structure comprises 260 residues: Small ribosomal subunit protein uS3 (260 aa).

One can recognise a KH type-2 domain in the interval 39–114 (LRQYIEQKLG…QIRINVVEVQ (76 aa)). The disordered stretch occupies residues 218–260 (QEVATPPPSPRDRDRDRGDRDREPRRRQQQRRRQQFEDRSNEG). Composition is skewed to basic and acidic residues over residues 227-243 (PRDRDRDRGDRDREPRR) and 251-260 (QQFEDRSNEG).

It belongs to the universal ribosomal protein uS3 family. As to quaternary structure, part of the 30S ribosomal subunit. Forms a tight complex with proteins S10 and S14.

Binds the lower part of the 30S subunit head. Binds mRNA in the 70S ribosome, positioning it for translation. This is Small ribosomal subunit protein uS3 from Nostoc sp. (strain PCC 7120 / SAG 25.82 / UTEX 2576).